The chain runs to 157 residues: Transcriptional repressor NrdR (157 aa).

The segment at 3–34 is a zinc-finger region; that stretch reads CPFCRHPDSRVVDSRTSDDGLSIRRRRQCPEC. Residues 46–136 form the ATP-cone domain; that stretch reads LSVIKRNGVV…VYQGFDSLDD (91 aa).

Belongs to the NrdR family. Zn(2+) is required as a cofactor.

Functionally, negatively regulates transcription of bacterial ribonucleotide reductase nrd genes and operons by binding to NrdR-boxes. This chain is Transcriptional repressor NrdR, found in Clavibacter michiganensis subsp. michiganensis (strain NCPPB 382).